The sequence spans 1154 residues: uncharacterized protein (1154 aa).

The signal sequence occupies residues 1-18 (MKRNIFIKLLISLLLLSS). The N-palmitoyl cysteine moiety is linked to residue cysteine 19. A lipid anchor (S-diacylglycerol cysteine) is attached at cysteine 19. 4 helical membrane passes run 288–308 (ISVS…FLIG), 394–414 (LGFI…FLIF), 423–443 (ALIT…FMLF), and 458–478 (ISYA…SMII).

This sequence belongs to the TrbL/VirB6 family.

It is found in the cell membrane. This is an uncharacterized protein from Rickettsia typhi (strain ATCC VR-144 / Wilmington).